The primary structure comprises 447 residues: DILAAFRVTPQPGVPPEEAGAAVAAESSTGTWTTVWTDGLTNLDRYKGRCYRXXRVIGEKDQFIAYVAYPLDLFEEGSVTNMFTSIVGNVFGFKALRXLRLEDLRIPPAYVKTFQGPPHGIQVERDKLNKYGRPLLGCTIKPKLGLSAKNYGRAVYECLRGGLDFTKDDENVNSQPFMRWRDRFLFCAEAIYKAQAETGEIKGHYLNATAGTCEDMNKRAVFARELGVPIVMHDYLTGGFTANTSLAHYCRDNGLLLHIHRAMHAVIDRQKSHGMHFRVLAKALRMSGGDHIHAGTVVGKLEGEREITLGFVDLLRDDLVEQDRSRGIYFTQDWVSLPGVLPVASGGIHVWHMPALTEIFGDDSVLQFGGGTLGHPWGNAPGAVANRVALEACVQARNEGRDLAREGNEIIREACKWSPELAAACEVWKEIRFEFKPVDTLDPDEKK.

Residues N89 and T139 each contribute to the substrate site. Residue K141 is the Proton acceptor of the active site. Substrate is bound at residue K143. Mg(2+) contacts are provided by K167, D169, and E170. An N6-carboxylysine modification is found at K167. The active-site Proton acceptor is H260. Substrate contacts are provided by R261, H293, and S345.

The protein belongs to the RuBisCO large chain family. Type I subfamily. As to quaternary structure, heterohexadecamer of 8 large chains and 8 small chains; disulfide-linked. The disulfide link is formed within the large subunit homodimers. The cofactor is Mg(2+). In terms of processing, the disulfide bond which can form in the large chain dimeric partners within the hexadecamer appears to be associated with oxidative stress and protein turnover.

The protein resides in the plastid. Its subcellular location is the chloroplast. It catalyses the reaction 2 (2R)-3-phosphoglycerate + 2 H(+) = D-ribulose 1,5-bisphosphate + CO2 + H2O. The enzyme catalyses D-ribulose 1,5-bisphosphate + O2 = 2-phosphoglycolate + (2R)-3-phosphoglycerate + 2 H(+). RuBisCO catalyzes two reactions: the carboxylation of D-ribulose 1,5-bisphosphate, the primary event in carbon dioxide fixation, as well as the oxidative fragmentation of the pentose substrate in the photorespiration process. Both reactions occur simultaneously and in competition at the same active site. This is Ribulose bisphosphate carboxylase large chain from Convolvulus tricolor (Dwarf morning glory).